The sequence spans 353 residues: Transcription termination/antitermination protein NusG (353 aa).

The KOW domain maps to 301-335 (VGDMVKIISGPFEDFAGVIKEIDPERQELKVNVTI).

This sequence belongs to the NusG family.

Its activity is regulated as follows. Regulated by autoinhibition via interaction of the N-terminal and the C-terminal domains. Autoinhibition may prevent NusG from interacting prematurely with other components of the transcription complex or non-specific interactions with other cellular components. In terms of biological role, participates in transcription elongation, termination and antitermination. The protein is Transcription termination/antitermination protein NusG of Thermotoga maritima (strain ATCC 43589 / DSM 3109 / JCM 10099 / NBRC 100826 / MSB8).